The chain runs to 449 residues: MSARKYFGTDGIRGRVGQGVISADFVLRLGNALGRVLTQIRGKRPLVLIGKDTRISGYMFEAALEAGLVAAGADVQLIGPMPTPAIAFLTSTLRADAGVVISASHNPHYDNGIKFFSAEGEKLDDATEAAIEAALDAPFHTVESERLGKAIRTRDAIGRYIEFCKASVARGFTLKWLKMVLDCAHGATYHIAPMLFRELGAEVVVIGAAPDGLNINAGVGSTHIDNLAAKVREYGAHLGIAFDGDGDRVLMADDQGNPVDGDDLLYVLARSWQASGRLTGTVVGTLMTNYGLEQALAALNIPFQRAKVGDRYVHQALVEGGGTLGGETSGHLLCLDRATTGDGIVSALQVLEALGRDGHSLRKALSSLSKVPQKTVNVRLDGGAAKAIVEAANVQQALQQAQAAVQGRGRAFLRPSGTEPVVRVTVEADDARLMQDTLDRLSGAVRDAA.

The active-site Phosphoserine intermediate is the S104. Mg(2+) is bound by residues S104, D243, D245, and D247. The residue at position 104 (S104) is a Phosphoserine.

The protein belongs to the phosphohexose mutase family. The cofactor is Mg(2+). Activated by phosphorylation.

The catalysed reaction is alpha-D-glucosamine 1-phosphate = D-glucosamine 6-phosphate. Functionally, catalyzes the conversion of glucosamine-6-phosphate to glucosamine-1-phosphate. The chain is Phosphoglucosamine mutase from Xanthomonas oryzae pv. oryzae (strain PXO99A).